Consider the following 171-residue polypeptide: AAF/I fimbrial subunit (171 aa).

A signal peptide spans 1–28 (MKTLKNMRRKNLCITLGLVSLLSRGANA).

Its subcellular location is the fimbrium. The chain is AAF/I fimbrial subunit (aggA) from Escherichia coli.